Consider the following 877-residue polypeptide: Phosphoenolpyruvate carboxylase (877 aa).

Residues H138 and K544 contribute to the active site.

It belongs to the PEPCase type 1 family. Mg(2+) is required as a cofactor.

The catalysed reaction is oxaloacetate + phosphate = phosphoenolpyruvate + hydrogencarbonate. Forms oxaloacetate, a four-carbon dicarboxylic acid source for the tricarboxylic acid cycle. The protein is Phosphoenolpyruvate carboxylase of Vibrio parahaemolyticus serotype O3:K6 (strain RIMD 2210633).